We begin with the raw amino-acid sequence, 541 residues long: uncharacterized protein (541 aa).

12 helical membrane-spanning segments follow: residues 99-119 (WIVV…SSVY), 131-153 (GVSI…FGSL), 165-185 (FVVY…GGCA), 187-207 (NIWT…TPLS), 224-244 (YVLP…PIIG), 256-276 (WVFW…FFFM), 325-345 (LLIT…VYII), 367-387 (IGLS…CTPI), 409-429 (LYPL…FAWT), 439-459 (WIVP…VFFV), 472-494 (AASA…SLVG), and 508-528 (SLLG…FIYG).

It belongs to the major facilitator superfamily. CAR1 family.

The protein resides in the membrane. This is an uncharacterized protein from Schizosaccharomyces pombe (strain 972 / ATCC 24843) (Fission yeast).